A 100-amino-acid polypeptide reads, in one-letter code: Small ribosomal subunit protein uS14c (100 aa).

The protein belongs to the universal ribosomal protein uS14 family. In terms of assembly, part of the 30S ribosomal subunit.

Its subcellular location is the plastid. It localises to the chloroplast. Its function is as follows. Binds 16S rRNA, required for the assembly of 30S particles. The protein is Small ribosomal subunit protein uS14c of Pisum sativum (Garden pea).